Here is a 660-residue protein sequence, read N- to C-terminus: DNA ligase (660 aa).

NAD(+) is bound by residues 31-35 (DKEYD), 79-80 (SL), and glutamate 111. Lysine 113 acts as the N6-AMP-lysine intermediate in catalysis. The NAD(+) site is built by arginine 134, glutamate 168, lysine 280, and lysine 304. Zn(2+) contacts are provided by cysteine 397, cysteine 400, cysteine 413, and cysteine 419. In terms of domain architecture, BRCT spans 577-660 (RQESIFSGKT…LDEAAFEALL (84 aa)).

It belongs to the NAD-dependent DNA ligase family. LigA subfamily. Mg(2+) is required as a cofactor. Requires Mn(2+) as cofactor.

It carries out the reaction NAD(+) + (deoxyribonucleotide)n-3'-hydroxyl + 5'-phospho-(deoxyribonucleotide)m = (deoxyribonucleotide)n+m + AMP + beta-nicotinamide D-nucleotide.. DNA ligase that catalyzes the formation of phosphodiester linkages between 5'-phosphoryl and 3'-hydroxyl groups in double-stranded DNA using NAD as a coenzyme and as the energy source for the reaction. It is essential for DNA replication and repair of damaged DNA. The chain is DNA ligase from Alkaliphilus metalliredigens (strain QYMF).